A 327-amino-acid chain; its full sequence is Metaxin-1 homolog (327 aa).

A helical transmembrane segment spans residues 281–301; the sequence is IVAGVGAVLAMGAFAAWRGIY.

The protein belongs to the metaxin family. In terms of assembly, associates with the mitochondrial contact site and cristae organizing system (MICOS) complex (also known as MINOS or MitOS complex).

It is found in the mitochondrion outer membrane. Involved in transport of proteins into the mitochondrion. Essential for embryonic development. The chain is Metaxin-1 homolog from Drosophila melanogaster (Fruit fly).